The primary structure comprises 581 residues: Interleukin-22 receptor subunit alpha-1 (581 aa).

A signal peptide spans methionine 1–alanine 15. At histidine 16 to serine 230 the chain is on the extracellular side. 2 Fibronectin type-III domains span residues threonine 18–serine 115 and proline 141–threonine 221. A disulfide bond links cysteine 71 and cysteine 79. Residues asparagine 80 and asparagine 172 are each glycosylated (N-linked (GlcNAc...) asparagine). Cysteine 128 and cysteine 217 are joined by a disulfide. A helical membrane pass occupies residues phenylalanine 231–tyrosine 251. Residues lysine 252 to serine 581 are Cytoplasmic-facing. The segment at glutamine 343 to tyrosine 364 is disordered. 2 positions are modified to phosphoserine; by GSK3-beta: serine 410 and serine 414. Lysine 449 is covalently cross-linked (Glycyl lysine isopeptide (Lys-Gly) (interchain with G-Cter in ubiquitin)).

The protein belongs to the type II cytokine receptor family. As to quaternary structure, heterodimer with IL10RB and with IL20RB. In terms of processing, phosphorylated by GSK3-BETA and MAPK; phosphorylation by GSK3-BETA stabilizes IL22RA1 by preventing its proteasomal degradation. Expressed in kidney, liver and lung.

It is found in the cell membrane. Its function is as follows. Component of the receptor for IL20, IL22 and IL24. Component of IL22 receptor formed by IL22RA1 and IL10RB enabling IL22 signaling via JAK/STAT pathways. IL22 also induces activation of MAPK1/MAPK3 and Akt kinases pathways. Component of one of the receptor for IL20 and IL24 formed by IL22RA1 and IL20RB also signaling through STATs activation. Mediates IL24 antiangiogenic activity as well as IL24 inhibitory effect on endothelial cell tube formation and differentiation. The protein is Interleukin-22 receptor subunit alpha-1 (Il22ra1) of Mus musculus (Mouse).